Reading from the N-terminus, the 564-residue chain is MRSDKIKKGVEQAPARSLLHATGQIKSPGDMDKPFIAICNSYIDIVPGHVHLRELADVAKEAIREAGGIPFEFNTIGVDDGIAMGHIGMRYSLPSREVIADAAETVINAHWFDGVFYIPNCDKITPGMLLASVRTNVPAIFCSGGPMKAGLSAHGKALTLSSVFEAVGAFKEGSMSQEDFLDMEANACPTCGSCAGMFTANSMNCLMEILGMAVPGNGTTLAVSDARRELIRESAFHLMDLVKKDIRPRDIITKDAIDDAFALDMAMGGSTNTVLHTLALANEAGIEDYDLERINDIAKRVPYLSKIAPSSSYSMHDVHEAGGVSAIIKELVDLGGAIHPDRITVTGKTIRENVADAKINNTDVIHPKENPYSPVGGLSMLFGNIAPKGATIKVGGVDPSVQVFKGEAICFSSHDEAVEAIDNHTVREGHVVVIRYEGPKGGPGMPEMLAPTSSIVGRGLGKDVALITDGRFSGATRGIAVGHISPEAAAGGPIALVHDGDIITIDLPNRTLNVDVPDEVLEERRKELPKFKAKVKTGYLARYTALVTSAHTGGILQIPEDLID.

Aspartate 80 serves as a coordination point for Mg(2+). Cysteine 121 serves as a coordination point for [2Fe-2S] cluster. Mg(2+)-binding residues include aspartate 122 and lysine 123. Lysine 123 is modified (N6-carboxylysine). Cysteine 194 lines the [2Fe-2S] cluster pocket. A Mg(2+)-binding site is contributed by glutamate 447. The Proton acceptor role is filled by serine 473.

It belongs to the IlvD/Edd family. Homodimer. [2Fe-2S] cluster serves as cofactor. Mg(2+) is required as a cofactor.

The catalysed reaction is (2R)-2,3-dihydroxy-3-methylbutanoate = 3-methyl-2-oxobutanoate + H2O. The enzyme catalyses (2R,3R)-2,3-dihydroxy-3-methylpentanoate = (S)-3-methyl-2-oxopentanoate + H2O. The protein operates within amino-acid biosynthesis; L-isoleucine biosynthesis; L-isoleucine from 2-oxobutanoate: step 3/4. It functions in the pathway amino-acid biosynthesis; L-valine biosynthesis; L-valine from pyruvate: step 3/4. Functionally, functions in the biosynthesis of branched-chain amino acids. Catalyzes the dehydration of (2R,3R)-2,3-dihydroxy-3-methylpentanoate (2,3-dihydroxy-3-methylvalerate) into 2-oxo-3-methylpentanoate (2-oxo-3-methylvalerate) and of (2R)-2,3-dihydroxy-3-methylbutanoate (2,3-dihydroxyisovalerate) into 2-oxo-3-methylbutanoate (2-oxoisovalerate), the penultimate precursor to L-isoleucine and L-valine, respectively. The sequence is that of Dihydroxy-acid dehydratase from Listeria innocua serovar 6a (strain ATCC BAA-680 / CLIP 11262).